The chain runs to 304 residues: Secreted mono- and diacylglycerol lipase MDL3 (304 aa).

The first 19 residues, 1–19 (MIVGPVISLLLSYFVLVSG), serve as a signal peptide directing secretion. Residues C55 and C297 are joined by a disulfide bond. The N-linked (GlcNAc...) asparagine glycan is linked to N161. S171 acts as the Nucleophile in catalysis. Residues D228 and H281 contribute to the active site.

This sequence belongs to the AB hydrolase superfamily. Lipase family. Class 3 subfamily.

It is found in the secreted. It localises to the cell wall. It catalyses the reaction a monoacylglycerol + H2O = glycerol + a fatty acid + H(+). The catalysed reaction is a diacylglycerol + H2O = a monoacylglycerol + a fatty acid + H(+). In terms of biological role, secreted lipase involved in Dandruff and seborrheic dermatitis (D/SD) probably via lipase-mediated breakdown of sebaceous lipids and release of irritating free fatty acids. Shows activity against monoglyceride and diglyceride substrates, but not triglyceride substrates and does not exhibit regio-selective production of diacylglycerols. Hydrolyzes distearin, dilinolein, dipalmitoylglycerol and dipalmitolein. Cleaves oleic acid from 1,2 isomers of diolein on both the 1 and the 2 position of the glycerol backbone, resulting mainly in free fatty acids but no monoolein is detected. Shows activity on monoolein and liberates mostly free fatty acids, but can also perform the reverse reaction and produce diolein. The sequence is that of Secreted mono- and diacylglycerol lipase MDL3 from Malassezia globosa (strain ATCC MYA-4612 / CBS 7966) (Dandruff-associated fungus).